The chain runs to 290 residues: Ribonuclease 3 (290 aa).

Residues 20-145 (YSCFYRILGF…FIGAIYLDRG (126 aa)) enclose the RNase III domain. E62 lines the Mg(2+) pocket. The active site involves D66. Residues N131 and E134 each coordinate Mg(2+). E134 is a catalytic residue. One can recognise a DRBM domain in the interval 173–242 (NFKSKLIEWS…AQMTLKKIKG (70 aa)). The disordered stretch occupies residues 254 to 290 (KTQNNVPAEDTTPESETSLTAENQQIDEIISTEEISV). Positions 267–279 (ESETSLTAENQQI) are enriched in polar residues.

This sequence belongs to the ribonuclease III family. Homodimer. Requires Mg(2+) as cofactor.

The protein resides in the cytoplasm. It catalyses the reaction Endonucleolytic cleavage to 5'-phosphomonoester.. In terms of biological role, digests double-stranded RNA. Involved in the processing of primary rRNA transcript to yield the immediate precursors to the large and small rRNAs (23S and 16S). Processes some mRNAs, and tRNAs when they are encoded in the rRNA operon. Processes pre-crRNA and tracrRNA of type II CRISPR loci if present in the organism. This is Ribonuclease 3 from Bacteroides fragilis (strain ATCC 25285 / DSM 2151 / CCUG 4856 / JCM 11019 / LMG 10263 / NCTC 9343 / Onslow / VPI 2553 / EN-2).